We begin with the raw amino-acid sequence, 231 residues long: Orotidine 5'-phosphate decarboxylase (231 aa).

Residues aspartate 11, lysine 33, 60-69, threonine 117, arginine 178, glutamine 187, glycine 207, and arginine 208 contribute to the substrate site; that span reads DLKFHDIPNT. Residue lysine 62 is the Proton donor of the active site.

It belongs to the OMP decarboxylase family. Type 1 subfamily. Homodimer.

It carries out the reaction orotidine 5'-phosphate + H(+) = UMP + CO2. It participates in pyrimidine metabolism; UMP biosynthesis via de novo pathway; UMP from orotate: step 2/2. Its function is as follows. Catalyzes the decarboxylation of orotidine 5'-monophosphate (OMP) to uridine 5'-monophosphate (UMP). The protein is Orotidine 5'-phosphate decarboxylase of Nitrosomonas eutropha (strain DSM 101675 / C91 / Nm57).